Consider the following 396-residue polypeptide: Elongation factor Tu (396 aa).

The tr-type G domain occupies 10 to 205; it reads KPHVNIGTIG…AVDESIPDPV (196 aa). The G1 stretch occupies residues 19-26; that stretch reads GHVDHGKT. 19 to 26 is a binding site for GTP; the sequence is GHVDHGKT. T26 serves as a coordination point for Mg(2+). The interval 62–66 is G2; it reads GITIN. The tract at residues 83–86 is G3; sequence DAPG. Residues 83–87 and 138–141 each bind GTP; these read DAPGH and NKAD. Positions 138 to 141 are G4; that stretch reads NKAD. Residues 175-177 form a G5 region; that stretch reads SAL.

This sequence belongs to the TRAFAC class translation factor GTPase superfamily. Classic translation factor GTPase family. EF-Tu/EF-1A subfamily. Monomer.

It is found in the cytoplasm. It catalyses the reaction GTP + H2O = GDP + phosphate + H(+). GTP hydrolase that promotes the GTP-dependent binding of aminoacyl-tRNA to the A-site of ribosomes during protein biosynthesis. The protein is Elongation factor Tu of Rhodococcus erythropolis (strain PR4 / NBRC 100887).